The sequence spans 133 residues: UPF0102 protein Anae109_1947 (133 aa).

Belongs to the UPF0102 family.

The polypeptide is UPF0102 protein Anae109_1947 (Anaeromyxobacter sp. (strain Fw109-5)).